The primary structure comprises 307 residues: Ornithine carbamoyltransferase (307 aa).

Residues 50–53 (STRT), glutamine 77, arginine 101, and 128–131 (HPCQ) contribute to the carbamoyl phosphate site. L-ornithine is bound by residues asparagine 160, aspartate 224, and 228–229 (SM). Carbamoyl phosphate-binding positions include 264–265 (CL) and arginine 292.

This sequence belongs to the aspartate/ornithine carbamoyltransferase superfamily. OTCase family.

The protein localises to the cytoplasm. The catalysed reaction is carbamoyl phosphate + L-ornithine = L-citrulline + phosphate + H(+). Its pathway is amino-acid biosynthesis; L-arginine biosynthesis; L-arginine from L-ornithine and carbamoyl phosphate: step 1/3. In terms of biological role, reversibly catalyzes the transfer of the carbamoyl group from carbamoyl phosphate (CP) to the N(epsilon) atom of ornithine (ORN) to produce L-citrulline. The protein is Ornithine carbamoyltransferase of Mycolicibacterium gilvum (strain PYR-GCK) (Mycobacterium gilvum (strain PYR-GCK)).